The sequence spans 2684 residues: Teneurin-1 (2684 aa).

Disordered stretches follow at residues 1-37 (MFQHRTTNAQGPPPNRPMPRPPAGMPMMTSSHEHDYT), 127-156 (TTSSTLSPASGQRYLDQPHTSGGAPNPTYS), and 170-204 (GTNQNRRRQQVGTMNNGDPVAGGPMALSKKKKKFD). Topologically, residues 1–216 (MFQHRTTNAQ…SDTCSRWPSK (216 aa)) are cytoplasmic. A compositionally biased stretch (pro residues) spans 11–24 (GPPPNRPMPRPPAG). Residues 127–136 (TTSSTLSPAS) show a composition bias toward low complexity. The helical transmembrane segment at 217–237 (WNILLAAALLVALFVICILLF) threads the bilayer. The Extracellular portion of the chain corresponds to 238 to 2684 (RAPNYVYTQP…VHSWKFRKSE (2447 aa)). EGF-like domains lie at 463–499 (TGRTCDEAVCPVVCSGNGVFSGGICVCKSGFKGKECE) and 501–534 (RHNWCEVADCNGRGRCDTDGRCRCNPGWTGEACE). 6 disulfide bridges follow: cysteine 467-cysteine 476, cysteine 472-cysteine 487, cysteine 489-cysteine 498, cysteine 505-cysteine 516, cysteine 510-cysteine 522, and cysteine 524-cysteine 533. The tract at residues 576-614 (PQAQSPPRRGQEPTESSKTRKAQVKPTPTSEKKKESREL) is disordered. Composition is skewed to basic and acidic residues over residues 584 to 593 (RGQEPTESSK) and 605 to 614 (SEKKKESREL). EGF-like domains are found at residues 650–684 (DSVDCSQQACQCVNGDCLDDGSCQCWKGWRGSNCT) and 716–753 (AIDGCPNQCSGKGECGMDRRSSEWSCRCQAGSTGVDCS). Cystine bridges form between cysteine 654-cysteine 666, cysteine 659-cysteine 672, cysteine 674-cysteine 683, cysteine 720-cysteine 730, cysteine 724-cysteine 741, and cysteine 743-cysteine 752. NHL repeat units lie at residues 1276-1317 (DSCG…IDTT), 1334-1378 (RTCA…VVHD), 1398-1441 (SASA…VRKL), and 1470-1513 (AVSL…VSAR).

This sequence belongs to the tenascin family. Teneurin subfamily. Post-translationally, probably proteolytically processed to generate a N-terminal intracellular domain. As to expression, isoform 1 is mainly expressed in organs derived from the mesoderm, including the pharynx, vulva muscles, gonad distal tip cells, intestine and several tail neurons. Isoform 2 is mainly expressed in the organs derived from the ectoderm, including hypodermal cells, head ganglion neurons and tail neurons (at protein level).

It is found in the nucleus. The protein localises to the cell membrane. It localises to the membrane. Functionally, plays a role in the gonadal basement membrane maintenance and/or adhesion early in development. Contributes to the guidance of pharyngeal neurons. The chain is Teneurin-1 (ten-1) from Caenorhabditis elegans.